A 149-amino-acid chain; its full sequence is Arginine repressor (149 aa).

The protein belongs to the ArgR family.

Its subcellular location is the cytoplasm. It participates in amino-acid biosynthesis; L-arginine biosynthesis [regulation]. Its function is as follows. Regulates arginine biosynthesis genes. The sequence is that of Arginine repressor from Listeria innocua serovar 6a (strain ATCC BAA-680 / CLIP 11262).